We begin with the raw amino-acid sequence, 571 residues long: Proline--tRNA ligase (571 aa).

This sequence belongs to the class-II aminoacyl-tRNA synthetase family. ProS type 1 subfamily. In terms of assembly, homodimer.

It is found in the cytoplasm. It catalyses the reaction tRNA(Pro) + L-proline + ATP = L-prolyl-tRNA(Pro) + AMP + diphosphate. Functionally, catalyzes the attachment of proline to tRNA(Pro) in a two-step reaction: proline is first activated by ATP to form Pro-AMP and then transferred to the acceptor end of tRNA(Pro). As ProRS can inadvertently accommodate and process non-cognate amino acids such as alanine and cysteine, to avoid such errors it has two additional distinct editing activities against alanine. One activity is designated as 'pretransfer' editing and involves the tRNA(Pro)-independent hydrolysis of activated Ala-AMP. The other activity is designated 'posttransfer' editing and involves deacylation of mischarged Ala-tRNA(Pro). The misacylated Cys-tRNA(Pro) is not edited by ProRS. The chain is Proline--tRNA ligase from Leuconostoc citreum (strain KM20).